Consider the following 367-residue polypeptide: Chorismate synthase (367 aa).

The NADP(+) site is built by R48 and R54. Residues 125-127 (RSS), 238-239 (NA), G278, 293-297 (KPTSS), and R319 contribute to the FMN site.

It belongs to the chorismate synthase family. As to quaternary structure, homotetramer. It depends on FMNH2 as a cofactor.

The enzyme catalyses 5-O-(1-carboxyvinyl)-3-phosphoshikimate = chorismate + phosphate. It functions in the pathway metabolic intermediate biosynthesis; chorismate biosynthesis; chorismate from D-erythrose 4-phosphate and phosphoenolpyruvate: step 7/7. Catalyzes the anti-1,4-elimination of the C-3 phosphate and the C-6 proR hydrogen from 5-enolpyruvylshikimate-3-phosphate (EPSP) to yield chorismate, which is the branch point compound that serves as the starting substrate for the three terminal pathways of aromatic amino acid biosynthesis. This reaction introduces a second double bond into the aromatic ring system. The chain is Chorismate synthase from Xanthomonas campestris pv. campestris (strain B100).